The sequence spans 2742 residues: Neurobeachin-like protein 2 (2742 aa).

2 disordered regions span residues 1312–1333 (ALSP…PSES) and 1356–1434 (LERA…QQTP). A compositionally biased stretch (pro residues) spans 1384-1394 (TPSPLDGPRPF). A compositionally biased stretch (polar residues) spans 1421–1433 (GDDTSNTSNPQQT). Thr-1855 is modified (phosphothreonine). The region spanning 1903 to 2028 (EKREKLVLSA…LRNQVYSLLL (126 aa)) is the BEACH-type PH domain. The 293-residue stretch at 2041-2333 (RSPLEMLRAS…QLLKEPHPPR (293 aa)) folds into the BEACH domain. WD repeat units lie at residues 2374–2412 (LVLA…TWLP), 2436–2479 (KLLS…SLPR), 2482–2519 (LLNQ…VWRL), 2532–2570 (KPVQ…IHTV), 2577–2619 (AALR…TYSL), 2627–2662 (RLRA…ILHL), and 2670–2705 (PPLP…VGAG). A phosphoserine mark is found at Ser-2727 and Ser-2730.

The protein belongs to the WD repeat neurobeachin family.

It localises to the endoplasmic reticulum. Functionally, probably involved in thrombopoiesis. Plays a role in the development or secretion of alpha-granules, that contain several growth factors important for platelet biogenesis. The chain is Neurobeachin-like protein 2 (Nbeal2) from Mus musculus (Mouse).